The primary structure comprises 252 residues: PF03932 family protein CutC (252 aa).

The protein belongs to the CutC family.

It localises to the cytoplasm. This Sodalis glossinidius (strain morsitans) protein is PF03932 family protein CutC.